The sequence spans 316 residues: MTRDELKTTKIGVLMGGLSAEREVSLASGGAVLKALQSRGYDAVPVDVGRDLPQVLVREWIDVAFICLHGRYGEDGTVQGLLELMGIPYTGSGVLASALAMNKIVAKEVFAARGLTIAPYRVVRRGETVDPVAEGFGYPVVVKPSQEGSSVGVSIVKSPEELPSALELAFRYDDDILVERFIKGREIQIGILDDRAMGAIEIVPVNEFYDFEAKYTAGKAEHICPPVLPAELHRRLLAEGEAAHRALGCSGYSRVDFLVTEGGECYLLEVNTLPGMTALSLLPEIALKESGIGFEDLVERILISAELKIKGEGAGS.

The ATP-grasp domain occupies 107 to 303 (KEVFAARGLT…FEDLVERILI (197 aa)). 133-188 (AEGFGYPVVVKPSQEGSSVGVSIVKSPEELPSALELAFRYDDDILVERFIKGREIQ) provides a ligand contact to ATP. Residues D256, E269, and N271 each contribute to the Mg(2+) site.

It belongs to the D-alanine--D-alanine ligase family. Mg(2+) serves as cofactor. Mn(2+) is required as a cofactor.

It localises to the cytoplasm. The enzyme catalyses 2 D-alanine + ATP = D-alanyl-D-alanine + ADP + phosphate + H(+). The protein operates within cell wall biogenesis; peptidoglycan biosynthesis. In terms of biological role, cell wall formation. The polypeptide is D-alanine--D-alanine ligase (Geobacter sulfurreducens (strain ATCC 51573 / DSM 12127 / PCA)).